The sequence spans 355 residues: Protein-glutamate methylesterase/protein-glutamine glutaminase (355 aa).

The region spanning 7 to 123 (AAVVVDDSQF…SVGIKQQQDE (117 aa)) is the Response regulatory domain. D57 carries the 4-aspartylphosphate modification. Residues 139–159 (TEAAAERTTSTATSTTTSRSA) are disordered. The region spanning 161-355 (EYVDKPTLVI…DGVLDTIMRE (195 aa)) is the CheB-type methylesterase domain. Catalysis depends on residues S173, H200, and D297.

The protein belongs to the CheB family. Phosphorylated by CheA. Phosphorylation of the N-terminal regulatory domain activates the methylesterase activity.

The protein resides in the cytoplasm. The catalysed reaction is [protein]-L-glutamate 5-O-methyl ester + H2O = L-glutamyl-[protein] + methanol + H(+). The enzyme catalyses L-glutaminyl-[protein] + H2O = L-glutamyl-[protein] + NH4(+). Involved in chemotaxis. Part of a chemotaxis signal transduction system that modulates chemotaxis in response to various stimuli. Catalyzes the demethylation of specific methylglutamate residues introduced into the chemoreceptors (methyl-accepting chemotaxis proteins or MCP) by CheR. Also mediates the irreversible deamidation of specific glutamine residues to glutamic acid. This Natronomonas pharaonis (strain ATCC 35678 / DSM 2160 / CIP 103997 / JCM 8858 / NBRC 14720 / NCIMB 2260 / Gabara) (Halobacterium pharaonis) protein is Protein-glutamate methylesterase/protein-glutamine glutaminase.